A 191-amino-acid polypeptide reads, in one-letter code: Phosphoheptose isomerase (191 aa).

In terms of domain architecture, SIS spans 37-191 (IADSFKQDGK…IIQLIEKEME (155 aa)). 52-54 (NGG) is a substrate binding site. The Zn(2+) site is built by H61 and E65. Substrate-binding positions include E65, 93-94 (ND), 119-121 (STS), S124, and Q172. Zn(2+) contacts are provided by Q172 and H180.

The protein belongs to the SIS family. GmhA subfamily. As to quaternary structure, homotetramer. The cofactor is Zn(2+).

The protein localises to the cytoplasm. It carries out the reaction 2 D-sedoheptulose 7-phosphate = D-glycero-alpha-D-manno-heptose 7-phosphate + D-glycero-beta-D-manno-heptose 7-phosphate. The protein operates within carbohydrate biosynthesis; D-glycero-D-manno-heptose 7-phosphate biosynthesis; D-glycero-alpha-D-manno-heptose 7-phosphate and D-glycero-beta-D-manno-heptose 7-phosphate from sedoheptulose 7-phosphate: step 1/1. It functions in the pathway bacterial outer membrane biogenesis; LPS core biosynthesis. Its function is as follows. Catalyzes the isomerization of sedoheptulose 7-phosphate in D-glycero-D-manno-heptose 7-phosphate. The chain is Phosphoheptose isomerase from Vibrio parahaemolyticus serotype O3:K6 (strain RIMD 2210633).